A 399-amino-acid polypeptide reads, in one-letter code: Elongation factor Tu (399 aa).

The tr-type G domain maps to 10 to 209 (KPHVNIGTIG…KVDEYIPTPV (200 aa)). Residues 19–26 (GHVDHGKT) form a G1 region. 19 to 26 (GHVDHGKT) lines the GTP pocket. Thr-26 serves as a coordination point for Mg(2+). The interval 60–64 (GITIA) is G2. The G3 stretch occupies residues 81 to 84 (DCPG). Residues 81–85 (DCPGH) and 136–139 (NKAD) contribute to the GTP site. Residues 136–139 (NKAD) form a G4 region. Positions 174 to 176 (SAL) are G5.

The protein belongs to the TRAFAC class translation factor GTPase superfamily. Classic translation factor GTPase family. EF-Tu/EF-1A subfamily. In terms of assembly, monomer.

It localises to the cytoplasm. It catalyses the reaction GTP + H2O = GDP + phosphate + H(+). Its function is as follows. GTP hydrolase that promotes the GTP-dependent binding of aminoacyl-tRNA to the A-site of ribosomes during protein biosynthesis. In Campylobacter curvus (strain 525.92), this protein is Elongation factor Tu.